The primary structure comprises 303 residues: D-alanine--D-alanine ligase (303 aa).

In terms of domain architecture, ATP-grasp spans 100-295; sequence KQLLRRHGIL…FPALIARLIE (196 aa). 127–180 contributes to the ATP binding site; the sequence is GLGYPLFVKPNTGGSSLCLSRVTQPEGLAPALEAVFAHCGEAIVEPAIPGVEVT. Mg(2+) contacts are provided by D249, E262, and N264.

Belongs to the D-alanine--D-alanine ligase family. Mg(2+) is required as a cofactor. The cofactor is Mn(2+).

The protein resides in the cytoplasm. It catalyses the reaction 2 D-alanine + ATP = D-alanyl-D-alanine + ADP + phosphate + H(+). It participates in cell wall biogenesis; peptidoglycan biosynthesis. In terms of biological role, cell wall formation. The sequence is that of D-alanine--D-alanine ligase from Nitratidesulfovibrio vulgaris (strain ATCC 29579 / DSM 644 / CCUG 34227 / NCIMB 8303 / VKM B-1760 / Hildenborough) (Desulfovibrio vulgaris).